Reading from the N-terminus, the 405-residue chain is Phosphoglycerate kinase (405 aa).

Substrate contacts are provided by residues 21 to 23 (DFN), Arg-36, 59 to 62 (HLGR), Arg-119, and Arg-161. ATP-binding positions include Lys-212, Gly-301, Glu-332, and 361–364 (GGDS).

It belongs to the phosphoglycerate kinase family. As to quaternary structure, monomer.

It is found in the cytoplasm. The enzyme catalyses (2R)-3-phosphoglycerate + ATP = (2R)-3-phospho-glyceroyl phosphate + ADP. It participates in carbohydrate degradation; glycolysis; pyruvate from D-glyceraldehyde 3-phosphate: step 2/5. The sequence is that of Phosphoglycerate kinase from Leuconostoc citreum (strain KM20).